Here is a 454-residue protein sequence, read N- to C-terminus: tRNA modification GTPase MnmE (454 aa).

Residues Arg-23, Glu-80, and Lys-120 each contribute to the (6S)-5-formyl-5,6,7,8-tetrahydrofolate site. A TrmE-type G domain is found at Gly-216 to Gly-377. A K(+)-binding site is contributed by Asn-226. Residues Asn-226–Ser-231, Thr-245–Thr-251, Asp-270–Gly-273, Asn-335–Asp-338, and Ser-358–Arg-360 contribute to the GTP site. Ser-230 is a Mg(2+) binding site. 3 residues coordinate K(+): Thr-245, Ile-247, and Thr-250. Position 251 (Thr-251) interacts with Mg(2+). Lys-454 contributes to the (6S)-5-formyl-5,6,7,8-tetrahydrofolate binding site.

Belongs to the TRAFAC class TrmE-Era-EngA-EngB-Septin-like GTPase superfamily. TrmE GTPase family. In terms of assembly, homodimer. Heterotetramer of two MnmE and two MnmG subunits. K(+) is required as a cofactor.

The protein localises to the cytoplasm. Functionally, exhibits a very high intrinsic GTPase hydrolysis rate. Involved in the addition of a carboxymethylaminomethyl (cmnm) group at the wobble position (U34) of certain tRNAs, forming tRNA-cmnm(5)s(2)U34. This chain is tRNA modification GTPase MnmE, found in Escherichia coli (strain 55989 / EAEC).